The sequence spans 377 residues: Succinyl-diaminopimelate desuccinylase (377 aa).

A Zn(2+)-binding site is contributed by histidine 67. Aspartate 69 is a catalytic residue. Aspartate 100 contacts Zn(2+). The Proton acceptor role is filled by glutamate 134. Residues glutamate 135, glutamate 163, and histidine 349 each coordinate Zn(2+).

Belongs to the peptidase M20A family. DapE subfamily. Homodimer. It depends on Zn(2+) as a cofactor. Requires Co(2+) as cofactor.

The enzyme catalyses N-succinyl-(2S,6S)-2,6-diaminopimelate + H2O = (2S,6S)-2,6-diaminopimelate + succinate. It participates in amino-acid biosynthesis; L-lysine biosynthesis via DAP pathway; LL-2,6-diaminopimelate from (S)-tetrahydrodipicolinate (succinylase route): step 3/3. In terms of biological role, catalyzes the hydrolysis of N-succinyl-L,L-diaminopimelic acid (SDAP), forming succinate and LL-2,6-diaminopimelate (DAP), an intermediate involved in the bacterial biosynthesis of lysine and meso-diaminopimelic acid, an essential component of bacterial cell walls. In Actinobacillus pleuropneumoniae serotype 3 (strain JL03), this protein is Succinyl-diaminopimelate desuccinylase.